The following is a 205-amino-acid chain: Molybdenum cofactor guanylyltransferase (205 aa).

Residues 14–16 (LAG), Lys27, Asp77, and Asp107 each bind GTP. Asp107 is a Mg(2+) binding site.

It belongs to the MobA family. In terms of assembly, monomer. The cofactor is Mg(2+).

It localises to the cytoplasm. The enzyme catalyses Mo-molybdopterin + GTP + H(+) = Mo-molybdopterin guanine dinucleotide + diphosphate. In terms of biological role, transfers a GMP moiety from GTP to Mo-molybdopterin (Mo-MPT) cofactor (Moco or molybdenum cofactor) to form Mo-molybdopterin guanine dinucleotide (Mo-MGD) cofactor. This is Molybdenum cofactor guanylyltransferase from Burkholderia ambifaria (strain ATCC BAA-244 / DSM 16087 / CCUG 44356 / LMG 19182 / AMMD) (Burkholderia cepacia (strain AMMD)).